We begin with the raw amino-acid sequence, 640 residues long: Sodium-dependent nutrient amino acid transporter 1 (640 aa).

The span at 1-13 (MELKPNGNHNNNN) shows a compositional bias: low complexity. The disordered stretch occupies residues 1–25 (MELKPNGNHNNNNAAEKSEDTEKAK). Topologically, residues 1–30 (MELKPNGNHNNNNAAEKSEDTEKAKAERTN) are cytoplasmic. Positions 16–25 (EKSEDTEKAK) are enriched in basic and acidic residues. The next 3 membrane-spanning stretches (helical) occupy residues 31–51 (WGNG…LGNV), 64–84 (GAFL…MYYL), and 117–137 (TICI…YLFV). Residues Asn-174, Asn-181, and Asn-197 are each glycosylated (N-linked (GlcNAc...) asparagine). 9 helical membrane passes run 228–248 (PDWK…LVIM), 257–277 (AAYF…IRAV), 306–326 (AVVQ…MFAS), 340–360 (IVTT…FAIL), 400–420 (LFSV…IVAL), 447–467 (CGFL…LTLV), 473–493 (TYVV…IYGL), 515–535 (CWSF…MVTI), and 551–571 (VAGW…GLWY).

Belongs to the sodium:neurotransmitter symporter (SNF) (TC 2.A.22) family.

It is found in the membrane. Unusual broad substrate spectrum amino acid:sodium cotransporter that promotes absorption of the D isomers of essential amino acids. Neutral amino acids are the preferred substrates, especially methionine and phenylalanine. This is Sodium-dependent nutrient amino acid transporter 1 from Drosophila ananassae (Fruit fly).